Here is a 709-residue protein sequence, read N- to C-terminus: Polyribonucleotide nucleotidyltransferase (709 aa).

Mg(2+) is bound by residues D485 and D491. A KH domain is found at 552–611; sequence PRIYTMKIDPKKIKDVIGKGGATIRSLTEETGTSIDIDDDGTVKIAAVDSNAAKNVMGRI. An S1 motif domain is found at 621-689; sequence GAIYKGKVTR…RQGRIRLTMK (69 aa).

Belongs to the polyribonucleotide nucleotidyltransferase family. Component of the RNA degradosome, which is a multiprotein complex involved in RNA processing and mRNA degradation. It depends on Mg(2+) as a cofactor.

The protein localises to the cytoplasm. It catalyses the reaction RNA(n+1) + phosphate = RNA(n) + a ribonucleoside 5'-diphosphate. Functionally, involved in mRNA degradation. Catalyzes the phosphorolysis of single-stranded polyribonucleotides processively in the 3'- to 5'-direction. In Haemophilus influenzae (strain PittEE), this protein is Polyribonucleotide nucleotidyltransferase.